Consider the following 778-residue polypeptide: ATP-dependent RNA helicase dbp7 (778 aa).

Residues 20-144 (QTKIKGGSWR…PMEDAKPTNA (125 aa)) are disordered. Positions 47–58 (RTADGDGNKDGN) are enriched in basic and acidic residues. Over residues 61–72 (GPRNPNRIQVSG) the composition is skewed to polar residues. Positions 92–110 (QAHGQGSGQSKGPKKGQGG) are enriched in gly residues. Positions 125-140 (NAVEEDKNDEPMEDAK) are enriched in basic and acidic residues. A Q motif motif is present at residues 151–180 (DTFTNLGLSPTLAAHLLTKLELKAPTAIQK). Positions 184–385 (TQLLKEETDA…EISLKDAVHI (202 aa)) constitute a Helicase ATP-binding domain. An ATP-binding site is contributed by 197-204 (AETGSGKT). Positions 321-324 (DEGD) match the DEAD box motif. Positions 411–625 (QLKQSYAIVA…ALTRSTTDDI (215 aa)) constitute a Helicase C-terminal domain. The segment covering 470–479 (LEGDNPDEGS) has biased composition (acidic residues). Disordered regions lie at residues 470–503 (LEGD…TVAP) and 700–778 (GKIN…FNLA). Basic and acidic residues-rich tracts occupy residues 480–492 (DSEH…KEKP) and 709–724 (PGKE…ERKS).

It belongs to the DEAD box helicase family. DDX31/DBP7 subfamily.

It localises to the nucleus. The protein localises to the nucleolus. The catalysed reaction is ATP + H2O = ADP + phosphate + H(+). In terms of biological role, ATP-binding RNA helicase involved in the biogenesis of 60S ribosomal subunits and is required for the normal formation of 25S and 5.8S rRNAs. This Emericella nidulans (strain FGSC A4 / ATCC 38163 / CBS 112.46 / NRRL 194 / M139) (Aspergillus nidulans) protein is ATP-dependent RNA helicase dbp7 (dbp7).